A 581-amino-acid polypeptide reads, in one-letter code: 2-succinyl-5-enolpyruvyl-6-hydroxy-3-cyclohexene-1-carboxylate synthase (581 aa).

It belongs to the TPP enzyme family. MenD subfamily. In terms of assembly, homodimer. Mg(2+) serves as cofactor. The cofactor is Mn(2+). Requires thiamine diphosphate as cofactor.

It carries out the reaction isochorismate + 2-oxoglutarate + H(+) = 5-enolpyruvoyl-6-hydroxy-2-succinyl-cyclohex-3-ene-1-carboxylate + CO2. It participates in quinol/quinone metabolism; 1,4-dihydroxy-2-naphthoate biosynthesis; 1,4-dihydroxy-2-naphthoate from chorismate: step 2/7. Its pathway is quinol/quinone metabolism; menaquinone biosynthesis. Its function is as follows. Catalyzes the thiamine diphosphate-dependent decarboxylation of 2-oxoglutarate and the subsequent addition of the resulting succinic semialdehyde-thiamine pyrophosphate anion to isochorismate to yield 2-succinyl-5-enolpyruvyl-6-hydroxy-3-cyclohexene-1-carboxylate (SEPHCHC). The sequence is that of 2-succinyl-5-enolpyruvyl-6-hydroxy-3-cyclohexene-1-carboxylate synthase from Chlorobium phaeobacteroides (strain BS1).